The primary structure comprises 515 residues: Aldehyde dehydrogenase (515 aa).

Over residues 1 to 12 (MTVAEQQPQHQG) the composition is skewed to polar residues. The tract at residues 1-20 (MTVAEQQPQHQGYANPGTPG) is disordered. Position 228–234 (228–234 (GFGLEAG)) interacts with NAD(+). Catalysis depends on residues Glu272 and Cys311.

This sequence belongs to the aldehyde dehydrogenase family.

It carries out the reaction an aldehyde + NAD(+) + H2O = a carboxylate + NADH + 2 H(+). The protein is Aldehyde dehydrogenase (aldA) of Deinococcus radiodurans (strain ATCC 13939 / DSM 20539 / JCM 16871 / CCUG 27074 / LMG 4051 / NBRC 15346 / NCIMB 9279 / VKM B-1422 / R1).